The sequence spans 88 residues: Small ribosomal subunit protein uS15 (88 aa).

The protein belongs to the universal ribosomal protein uS15 family. In terms of assembly, part of the 30S ribosomal subunit. Forms a bridge to the 50S subunit in the 70S ribosome, contacting the 23S rRNA.

One of the primary rRNA binding proteins, it binds directly to 16S rRNA where it helps nucleate assembly of the platform of the 30S subunit by binding and bridging several RNA helices of the 16S rRNA. In terms of biological role, forms an intersubunit bridge (bridge B4) with the 23S rRNA of the 50S subunit in the ribosome. This is Small ribosomal subunit protein uS15 from Mycoplasma mobile (strain ATCC 43663 / 163K / NCTC 11711) (Mesomycoplasma mobile).